Here is a 769-residue protein sequence, read N- to C-terminus: CO(2)-response secreted protease (769 aa).

A signal peptide spans 1–27; that stretch reads MKGITFFTPFLSFLYLLCILFMTETEA. Positions 35 to 108 constitute an Inhibitor I9 domain; it reads VYIVYMGSAS…VFPDPHFQLH (74 aa). Positions 112 to 613 constitute a Peptidase S8 domain; that stretch reads SWDFLKYQTS…AGELSSTASM (502 aa). Active-site charge relay system residues include Asp145 and His210. The 85-residue stretch at 381–465 folds into the PA domain; that stretch reads ADASEGSARA…SKEAAEIFSY (85 aa). Ser546 (charge relay system) is an active-site residue.

Belongs to the peptidase S8 family. Expressed in roots, guard cells and meristemoid and pavement cells.

The protein localises to the secreted. It is found in the cell wall. The catalysed reaction is Release of an N-terminal tripeptide from a polypeptide.. In terms of biological role, mediates CO(2)-controlled stomatal development by cleaving peptide EPF2 (AC Q8LC53). Not active on peptides EPF1 (AC Q8S8I4) or stomagen (AC Q9SV72). In Arabidopsis thaliana (Mouse-ear cress), this protein is CO(2)-response secreted protease.